Here is a 128-residue protein sequence, read N- to C-terminus: NHP2-like protein 1 (128 aa).

The segment at 36-48 (RKGANEATKTLNR) is interaction with U4 snRNA and U4atac snRNA. The segment at 96–128 (SRPVIACSVTIKEGSQLKPQIQSVQQAIERLLV) is important for U4 snRNA-binding.

The protein belongs to the eukaryotic ribosomal protein eL8 family. As to quaternary structure, identified in the spliceosome B complex. Component of the U4/U6-U5 tri-snRNP complex. Part of the small subunit (SSU) processome, composed of more than 70 proteins and the RNA chaperone small nucleolar RNA (snoRNA) U3.

The protein localises to the nucleus. It is found in the nucleolus. In terms of biological role, part of the small subunit (SSU) processome, first precursor of the small eukaryotic ribosomal subunit. During the assembly of the SSU processome in the nucleolus, many ribosome biogenesis factors, an RNA chaperone and ribosomal proteins associate with the nascent pre-rRNA and work in concert to generate RNA folding, modifications, rearrangements and cleavage as well as targeted degradation of pre-ribosomal RNA by the RNA exosome. Involved in pre-mRNA splicing as component of the spliceosome. Binds to the 5'-stem-loop of U4 snRNA and thereby contributes to spliceosome assembly. The protein undergoes a conformational change upon RNA-binding. Core component of box C/D small nucleolar ribonucleoprotein (snoRNP) complexes that function in methylation of multiple sites on ribosomal RNAs (rRNAs) and messenger RNAs (mRNAs). The sequence is that of NHP2-like protein 1 from Xenopus laevis (African clawed frog).